Reading from the N-terminus, the 382-residue chain is SOX domain-containing protein dichaete (382 aa).

2 disordered regions span residues 53-142 and 346-382; these read GGSP…EGHI and YPSS…PVLY. A compositionally biased stretch (gly residues) spans 60-69; sequence AGQGVNGSSG. The span at 96-123 shows a compositional bias: low complexity; it reads NSSIGSAGSLGSQSSLGSNGSGLNSSSG. The segment at residues 142 to 210 is a DNA-binding region (HMG box); that stretch reads IKRPMNAFMV…LHMKEHPDYK (69 aa). The segment covering 347-360 has biased composition (low complexity); sequence PSSSTSSPGSSPGT.

In terms of tissue distribution, initially expressed in a pair-rule-like pattern which is rapidly replaced by strong neuroectoderm expression.

It is found in the nucleus. Functionally, essential for segmentation and CNS development. May modulate the actions of other transcription factors, including gap and pair-rule proteins. This is SOX domain-containing protein dichaete (D) from Drosophila melanogaster (Fruit fly).